The following is a 261-amino-acid chain: Carnitinyl-CoA dehydratase (261 aa).

The Nucleophile role is filled by E111. E131 functions as the Proton acceptor in the catalytic mechanism.

It belongs to the enoyl-CoA hydratase/isomerase family.

The catalysed reaction is (R)-carnitinyl-CoA = crotonobetainyl-CoA + H2O. It functions in the pathway amine and polyamine metabolism; carnitine metabolism. Its function is as follows. Catalyzes the reversible dehydration of L-carnitinyl-CoA to crotonobetainyl-CoA. This chain is Carnitinyl-CoA dehydratase, found in Escherichia coli (strain SMS-3-5 / SECEC).